The primary structure comprises 892 residues: Alanine--tRNA ligase (892 aa).

The Zn(2+) site is built by histidine 596, histidine 600, cysteine 700, and histidine 704.

This sequence belongs to the class-II aminoacyl-tRNA synthetase family. Zn(2+) serves as cofactor.

The protein resides in the cytoplasm. The catalysed reaction is tRNA(Ala) + L-alanine + ATP = L-alanyl-tRNA(Ala) + AMP + diphosphate. In terms of biological role, catalyzes the attachment of alanine to tRNA(Ala) in a two-step reaction: alanine is first activated by ATP to form Ala-AMP and then transferred to the acceptor end of tRNA(Ala). Also edits incorrectly charged Ser-tRNA(Ala) and Gly-tRNA(Ala) via its editing domain. This chain is Alanine--tRNA ligase, found in Methanococcus maripaludis (strain C5 / ATCC BAA-1333).